Consider the following 141-residue polypeptide: Nuclear receptor 2C2-associated protein (141 aa).

This sequence belongs to the NR2C2AP family.

Its subcellular location is the nucleus. Functionally, may act as a repressor of nr2c2-mediated transactivation by suppressing the binding between nr2c2 and its response element in target genes. This chain is Nuclear receptor 2C2-associated protein (nr2c2ap), found in Danio rerio (Zebrafish).